A 323-amino-acid polypeptide reads, in one-letter code: Ferrochelatase (323 aa).

Residues His196 and Glu277 each contribute to the Fe cation site.

It belongs to the ferrochelatase family.

The protein resides in the cytoplasm. The catalysed reaction is heme b + 2 H(+) = protoporphyrin IX + Fe(2+). The protein operates within porphyrin-containing compound metabolism; protoheme biosynthesis; protoheme from protoporphyrin-IX: step 1/1. Functionally, catalyzes the ferrous insertion into protoporphyrin IX. This chain is Ferrochelatase, found in Haemophilus influenzae (strain PittEE).